A 615-amino-acid polypeptide reads, in one-letter code: Chaperone protein HtpG (615 aa).

The tract at residues 1–335 (MSAEKQTHGF…APDLPLNVSR (335 aa)) is a; substrate-binding. The segment at 336–541 (ELLQDYGPVQ…EDQLGPQMRR (206 aa)) is b. The tract at residues 542 to 615 (MLEAAGQPVP…RMQALLSQSV (74 aa)) is c.

This sequence belongs to the heat shock protein 90 family. Homodimer.

The protein resides in the cytoplasm. Functionally, molecular chaperone. Has ATPase activity. The sequence is that of Chaperone protein HtpG from Alcanivorax borkumensis (strain ATCC 700651 / DSM 11573 / NCIMB 13689 / SK2).